A 431-amino-acid polypeptide reads, in one-letter code: Tol-Pal system protein TolB (431 aa).

The first 24 residues, 1–24 (MMKFLTRMLSAFAVLFFAISTAQA), serve as a signal peptide directing secretion. The interval 318–340 (QVYRMSSSGGAASPVGGRGSAQI) is disordered. Low complexity predominate over residues 323 to 332 (SSSGGAASPV).

This sequence belongs to the TolB family. The Tol-Pal system is composed of five core proteins: the inner membrane proteins TolA, TolQ and TolR, the periplasmic protein TolB and the outer membrane protein Pal. They form a network linking the inner and outer membranes and the peptidoglycan layer.

It localises to the periplasm. Part of the Tol-Pal system, which plays a role in outer membrane invagination during cell division and is important for maintaining outer membrane integrity. The protein is Tol-Pal system protein TolB of Mannheimia succiniciproducens (strain KCTC 0769BP / MBEL55E).